We begin with the raw amino-acid sequence, 447 residues long: Probable glycine dehydrogenase (decarboxylating) subunit 1 (447 aa).

This sequence belongs to the GcvP family. N-terminal subunit subfamily. The glycine cleavage system is composed of four proteins: P, T, L and H. In this organism, the P 'protein' is a heterodimer of two subunits.

It carries out the reaction N(6)-[(R)-lipoyl]-L-lysyl-[glycine-cleavage complex H protein] + glycine + H(+) = N(6)-[(R)-S(8)-aminomethyldihydrolipoyl]-L-lysyl-[glycine-cleavage complex H protein] + CO2. Its function is as follows. The glycine cleavage system catalyzes the degradation of glycine. The P protein binds the alpha-amino group of glycine through its pyridoxal phosphate cofactor; CO(2) is released and the remaining methylamine moiety is then transferred to the lipoamide cofactor of the H protein. The chain is Probable glycine dehydrogenase (decarboxylating) subunit 1 from Maricaulis maris (strain MCS10) (Caulobacter maris).